A 540-amino-acid chain; its full sequence is Chaperonin GroEL (540 aa).

Residues 29 to 32 (TIGP), 86 to 90 (DGTTT), glycine 413, 476 to 478 (NAA), and aspartate 492 each bind ATP.

Belongs to the chaperonin (HSP60) family. Forms a cylinder of 14 subunits composed of two heptameric rings stacked back-to-back. Interacts with the co-chaperonin GroES.

It localises to the cytoplasm. It catalyses the reaction ATP + H2O + a folded polypeptide = ADP + phosphate + an unfolded polypeptide.. Its function is as follows. Together with its co-chaperonin GroES, plays an essential role in assisting protein folding. The GroEL-GroES system forms a nano-cage that allows encapsulation of the non-native substrate proteins and provides a physical environment optimized to promote and accelerate protein folding. This Staphylococcus carnosus (strain TM300) protein is Chaperonin GroEL.